We begin with the raw amino-acid sequence, 921 residues long: uncharacterized protein (921 aa).

Residues 334 to 628 (MTKRKFLSID…NLKSIYYDFF (295 aa)) are kinase-like. The segment covering 401 to 494 (GSSEWSFGSS…NNNNSDGSSG (94 aa)) has biased composition (low complexity). Disordered regions lie at residues 401–499 (GSSE…DNRN) and 664–711 (NLYS…NSNS).

This is an uncharacterized protein from Dictyostelium discoideum (Social amoeba).